Consider the following 142-residue polypeptide: 5a,11a-dehydrotetracycline/5a,11a-dehydrooxytetracycline reductase (142 aa).

Belongs to the pyridoxamine 5'-phosphate oxidase family.

The enzyme catalyses tetracycline + oxidized coenzyme F420-(gamma-L-Glu)(n) + H(+) = 5a,11a-dehydrotetracycline + reduced coenzyme F420-(gamma-L-Glu)(n). It catalyses the reaction oxytetracycline + oxidized coenzyme F420-(gamma-L-Glu)(n) + H(+) = 5a,11a-dehydrooxytetracycline + reduced coenzyme F420-(gamma-L-Glu)(n). The protein operates within antibiotic biosynthesis; oxytetracycline biosynthesis. In terms of biological role, involved in the biosynthesis of the antibiotics tetracycline and oxytetracycline. Catalyzes the C(5) reduction of 5a,11a-dehydrooxytetracycline to yield oxytetracycline as a major product. Also catalyzes the C(12) reduction of 5a,11a-dehydrotetracycline (12-dehydrotetracycline) to produce tetracycline as a minor product. This is 5a,11a-dehydrotetracycline/5a,11a-dehydrooxytetracycline reductase from Streptomyces rimosus subsp. rimosus (strain ATCC 10970 / DSM 40260 / JCM 4667 / NRRL 2234).